The following is a 312-amino-acid chain: tRNA dimethylallyltransferase (312 aa).

G10–T17 contributes to the ATP binding site. Position 12 to 17 (T12 to T17) interacts with substrate. The segment at D35 to Q38 is interaction with substrate tRNA.

Belongs to the IPP transferase family. As to quaternary structure, monomer. It depends on Mg(2+) as a cofactor.

The enzyme catalyses adenosine(37) in tRNA + dimethylallyl diphosphate = N(6)-dimethylallyladenosine(37) in tRNA + diphosphate. Functionally, catalyzes the transfer of a dimethylallyl group onto the adenine at position 37 in tRNAs that read codons beginning with uridine, leading to the formation of N6-(dimethylallyl)adenosine (i(6)A). The sequence is that of tRNA dimethylallyltransferase from Alkaliphilus metalliredigens (strain QYMF).